The primary structure comprises 201 residues: Recombination protein RecR (201 aa).

The segment at 57–72 adopts a C4-type zinc-finger fold; sequence CSDCRTFTEQDVCAIC. The 96-residue stretch at 81 to 176 folds into the Toprim domain; sequence GLVCVVESPA…MASRIAHGVP (96 aa).

Belongs to the RecR family.

Its function is as follows. May play a role in DNA repair. It seems to be involved in an RecBC-independent recombinational process of DNA repair. It may act with RecF and RecO. The polypeptide is Recombination protein RecR (Pectobacterium atrosepticum (strain SCRI 1043 / ATCC BAA-672) (Erwinia carotovora subsp. atroseptica)).